The following is a 634-amino-acid chain: Formate--tetrahydrofolate ligase (634 aa).

78–85 (TPLGEGKS) contributes to the ATP binding site.

It belongs to the formate--tetrahydrofolate ligase family. In terms of assembly, homodimer.

It carries out the reaction (6S)-5,6,7,8-tetrahydrofolate + formate + ATP = (6R)-10-formyltetrahydrofolate + ADP + phosphate. It functions in the pathway one-carbon metabolism; tetrahydrofolate interconversion. In Arabidopsis thaliana (Mouse-ear cress), this protein is Formate--tetrahydrofolate ligase (THFS).